The primary structure comprises 298 residues: Glutamyl-Q tRNA(Asp) synthetase (298 aa).

L-glutamate-binding positions include 9 to 13 (RFAPS) and Glu45. The 'HIGH' region signature appears at 12–22 (PSPSGELHFGS). Zn(2+) is bound by residues Cys101, Cys103, Tyr115, and Cys119. Tyr172 and Arg190 together coordinate L-glutamate. Residues 228–232 (KLSKQ) carry the 'KMSKS' region motif. Lys231 contributes to the ATP binding site.

Belongs to the class-I aminoacyl-tRNA synthetase family. GluQ subfamily. It depends on Zn(2+) as a cofactor.

Functionally, catalyzes the tRNA-independent activation of glutamate in presence of ATP and the subsequent transfer of glutamate onto a tRNA(Asp). Glutamate is transferred on the 2-amino-5-(4,5-dihydroxy-2-cyclopenten-1-yl) moiety of the queuosine in the wobble position of the QUC anticodon. The sequence is that of Glutamyl-Q tRNA(Asp) synthetase from Citrobacter koseri (strain ATCC BAA-895 / CDC 4225-83 / SGSC4696).